The primary structure comprises 44 residues: Photosystem I reaction center subunit IX (44 aa).

A helical transmembrane segment spans residues 7–27 (YLSVAPVLSTLWFGALAGLLI).

Belongs to the PsaJ family.

The protein localises to the plastid. Its subcellular location is the chloroplast thylakoid membrane. May help in the organization of the PsaE and PsaF subunits. This chain is Photosystem I reaction center subunit IX, found in Eucalyptus globulus subsp. globulus (Tasmanian blue gum).